The sequence spans 145 residues: Prefoldin subunit alpha (145 aa).

This sequence belongs to the prefoldin alpha subunit family. As to quaternary structure, heterohexamer of two alpha and four beta subunits.

The protein localises to the cytoplasm. Its function is as follows. Molecular chaperone capable of stabilizing a range of proteins. Seems to fulfill an ATP-independent, HSP70-like function in archaeal de novo protein folding. This Nitrosopumilus maritimus (strain SCM1) protein is Prefoldin subunit alpha.